Consider the following 338-residue polypeptide: uncharacterized protein (338 aa).

An N-terminal signal peptide occupies residues 1–29; that stretch reads MIKQLYKNITICSLTISTALTVFPATSYA.

Belongs to the aerolysin family.

This is an uncharacterized protein from Staphylococcus aureus (strain bovine RF122 / ET3-1).